The following is a 246-amino-acid chain: Dihydroorotate dehydrogenase B (NAD(+)), electron transfer subunit (246 aa).

The FAD-binding FR-type domain maps to 3-95 (MEYFKGKVKE…IGPLGNGFDI (93 aa)). Residues 48-51 (RPIS) and 70-71 (GT) contribute to the FAD site. [2Fe-2S] cluster contacts are provided by cysteine 213, cysteine 218, cysteine 221, and cysteine 233.

This sequence belongs to the PyrK family. As to quaternary structure, heterotetramer of 2 PyrK and 2 PyrD type B subunits. [2Fe-2S] cluster serves as cofactor. FAD is required as a cofactor.

It participates in pyrimidine metabolism; UMP biosynthesis via de novo pathway; orotate from (S)-dihydroorotate (NAD(+) route): step 1/1. Responsible for channeling the electrons from the oxidation of dihydroorotate from the FMN redox center in the PyrD type B subunit to the ultimate electron acceptor NAD(+). The sequence is that of Dihydroorotate dehydrogenase B (NAD(+)), electron transfer subunit from Clostridium perfringens (strain 13 / Type A).